We begin with the raw amino-acid sequence, 759 residues long: Protein transport protein sec23-1 (759 aa).

Positions 56, 60, 79, and 82 each coordinate Zn(2+).

Belongs to the SEC23/SEC24 family. SEC23 subfamily. As to quaternary structure, the COPII coat is composed of at least 5 proteins: the sec23/24 complex, the sec13/31 complex, and the protein sar1.

The protein resides in the cytoplasm. It is found in the cytoplasmic vesicle. Its subcellular location is the COPII-coated vesicle membrane. The protein localises to the endoplasmic reticulum membrane. It localises to the golgi apparatus membrane. In terms of biological role, component of the coat protein complex II (COPII) which promotes the formation of transport vesicles from the endoplasmic reticulum (ER). The coat has two main functions, the physical deformation of the endoplasmic reticulum membrane into vesicles and the selection of cargo molecules. The chain is Protein transport protein sec23-1 (sec231) from Schizosaccharomyces pombe (strain 972 / ATCC 24843) (Fission yeast).